The chain runs to 167 residues: MLIYQDVLTGDEMISDAFPIKEIGDIAYEVDCANIIIKEGDVDIGGNPSAEEAAEALEEGAQQVNNVVHSFRLQSTSFDKKSYLTYLKGYMKAIKSKLQESNPDRVAAFEKGAQDFAKKIVANFKDYEFYIGESMNPDGMVCLLNYREDGVTPYFTMWKDGLKEIKI.

The 167-residue stretch at 1-167 (MLIYQDVLTG…WKDGLKEIKI (167 aa)) folds into the TCTP domain.

Belongs to the TCTP family.

Its subcellular location is the cytoplasm. It is found in the cytoskeleton. Functionally, involved in protein synthesis. Involved in microtubule stabilization. In Cryptococcus neoformans var. neoformans serotype D (strain B-3501A) (Filobasidiella neoformans), this protein is Translationally-controlled tumor protein homolog.